The sequence spans 479 residues: Putative F-box/LRR-repeat protein At1g56400 (479 aa).

One can recognise an F-box domain in the interval 12–60 (QDRLSNLPDVLLIMIISCLSFKECIRTSVLAKRWRYLCRETRNISFKET). LRR repeat units lie at residues 99-129 (YFSI…VLDF), 139-167 (CASR…KIYS), 186-211 (IGWI…SINY), 228-254 (VFES…KYSG), 287-312 (RTKL…SVCP), 342-367 (LHVM…TFDI), and 419-446 (LKFL…ELYM).

This Arabidopsis thaliana (Mouse-ear cress) protein is Putative F-box/LRR-repeat protein At1g56400.